The sequence spans 333 residues: GTP 3',8-cyclase (333 aa).

Positions Lys7–Glu221 constitute a Radical SAM core domain. Residue Arg16 coordinates GTP. 2 residues coordinate [4Fe-4S] cluster: Cys23 and Cys27. Tyr29 lines the S-adenosyl-L-methionine pocket. Cys30 lines the [4Fe-4S] cluster pocket. Arg66 lines the GTP pocket. An S-adenosyl-L-methionine-binding site is contributed by Gly70. Thr97 provides a ligand contact to GTP. Ser121 is an S-adenosyl-L-methionine binding site. A GTP-binding site is contributed by Lys158. Met192 is a binding site for S-adenosyl-L-methionine. 2 residues coordinate [4Fe-4S] cluster: Cys257 and Cys260. Arg262–Arg264 is a binding site for GTP. Cys274 provides a ligand contact to [4Fe-4S] cluster.

It belongs to the radical SAM superfamily. MoaA family. As to quaternary structure, monomer and homodimer. The cofactor is [4Fe-4S] cluster.

The catalysed reaction is GTP + AH2 + S-adenosyl-L-methionine = (8S)-3',8-cyclo-7,8-dihydroguanosine 5'-triphosphate + 5'-deoxyadenosine + L-methionine + A + H(+). The protein operates within cofactor biosynthesis; molybdopterin biosynthesis. Its function is as follows. Catalyzes the cyclization of GTP to (8S)-3',8-cyclo-7,8-dihydroguanosine 5'-triphosphate. In Listeria monocytogenes serotype 4b (strain CLIP80459), this protein is GTP 3',8-cyclase.